A 341-amino-acid polypeptide reads, in one-letter code: UDP-3-O-acylglucosamine N-acyltransferase (341 aa).

The active-site Proton acceptor is the His-239.

It belongs to the transferase hexapeptide repeat family. LpxD subfamily. Homotrimer.

The enzyme catalyses a UDP-3-O-[(3R)-3-hydroxyacyl]-alpha-D-glucosamine + a (3R)-hydroxyacyl-[ACP] = a UDP-2-N,3-O-bis[(3R)-3-hydroxyacyl]-alpha-D-glucosamine + holo-[ACP] + H(+). It functions in the pathway bacterial outer membrane biogenesis; LPS lipid A biosynthesis. In terms of biological role, catalyzes the N-acylation of UDP-3-O-acylglucosamine using 3-hydroxyacyl-ACP as the acyl donor. Is involved in the biosynthesis of lipid A, a phosphorylated glycolipid that anchors the lipopolysaccharide to the outer membrane of the cell. This Photobacterium profundum (strain SS9) protein is UDP-3-O-acylglucosamine N-acyltransferase.